The chain runs to 458 residues: Bifunctional protein HldE (458 aa).

Residues 1-311 (MVNVLVVGDL…ENLKSKKSGF (311 aa)) are ribokinase. 189-192 (NKKE) contacts ATP. Asp-257 is a catalytic residue. Residues 333–458 (FTNGCFDILH…TTNIINKIKG (126 aa)) are cytidylyltransferase.

In the N-terminal section; belongs to the carbohydrate kinase PfkB family. The protein in the C-terminal section; belongs to the cytidylyltransferase family. In terms of assembly, homodimer.

It catalyses the reaction D-glycero-beta-D-manno-heptose 7-phosphate + ATP = D-glycero-beta-D-manno-heptose 1,7-bisphosphate + ADP + H(+). It carries out the reaction D-glycero-beta-D-manno-heptose 1-phosphate + ATP + H(+) = ADP-D-glycero-beta-D-manno-heptose + diphosphate. It functions in the pathway nucleotide-sugar biosynthesis; ADP-L-glycero-beta-D-manno-heptose biosynthesis; ADP-L-glycero-beta-D-manno-heptose from D-glycero-beta-D-manno-heptose 7-phosphate: step 1/4. Its pathway is nucleotide-sugar biosynthesis; ADP-L-glycero-beta-D-manno-heptose biosynthesis; ADP-L-glycero-beta-D-manno-heptose from D-glycero-beta-D-manno-heptose 7-phosphate: step 3/4. Its function is as follows. Catalyzes the phosphorylation of D-glycero-D-manno-heptose 7-phosphate at the C-1 position to selectively form D-glycero-beta-D-manno-heptose-1,7-bisphosphate. In terms of biological role, catalyzes the ADP transfer from ATP to D-glycero-beta-D-manno-heptose 1-phosphate, yielding ADP-D-glycero-beta-D-manno-heptose. This Campylobacter fetus subsp. fetus (strain 82-40) protein is Bifunctional protein HldE.